The following is a 245-amino-acid chain: Phycocyanobilin:ferredoxin oxidoreductase (245 aa).

It belongs to the HY2 family.

The catalysed reaction is (2R,3Z)-phycocyanobilin + 4 oxidized [2Fe-2S]-[ferredoxin] = biliverdin IXalpha + 4 reduced [2Fe-2S]-[ferredoxin] + 4 H(+). In terms of biological role, catalyzes the four-electron reduction of biliverdin IX-alpha (2-electron reduction at both the A and D rings); the reaction proceeds via an isolatable 2-electron intermediate, 181,182-dihydrobiliverdin. The sequence is that of Phycocyanobilin:ferredoxin oxidoreductase from Rippkaea orientalis (strain PCC 8801 / RF-1) (Cyanothece sp. (strain PCC 8801)).